We begin with the raw amino-acid sequence, 272 residues long: Dioscorin DB3L (272 aa).

A signal peptide spans 1-25; it reads MSSSTLFHLFLLSSLLFSCLSNARP. The 236-residue stretch at 28 to 263 folds into the Alpha-carbonic anhydrase domain; the sequence is DDFSYIEGSP…LKFRTIFFYP (236 aa). C53 and C213 are joined by a disulfide.

It belongs to the alpha-class carbonic anhydrase family. Homodimer; disulfide-linked. Post-translationally, not glycosylated. In terms of tissue distribution, expressed in tuber (at protein level).

With respect to regulation, loss of hemagglutinating activity by EDTA treatment. The activity is fully recovered by the addition of 5 mM Ca(2+) ions, but not with Mg(2+) and Mn 2(+). Hemagglutination activity is inhibited by maltose and its derivatives, with maltopentaose and maltohexaose being the best inhibitors followed by maltose and iso maltose. Not inhibited by glycoproteins. Functionally, maltose-binding lectin. No affinity is detected toward glucose. Has hemagglutinating activity against rabbit erythrocytes at 3.9 ug/ml. No carbonate dehydratase or trypsin inhibitor activity detected by measuring the hydrolysis of 4-nitrophenyl acetate or the inhibition of bovine trypsin-catalyzed hydrolysis of N-benzoyl-L-arginine ethyl ester, respectively. The protein is Dioscorin DB3L of Dioscorea polystachya (Chinese yam).